The following is a 421-amino-acid chain: Immunoglobulin heavy constant epsilon (421 aa).

Ig-like domains follow at residues Pro-5–Thr-97, Pro-99–Ser-184, Pro-201–Thr-301, and Pro-310–Ser-410. An intrachain disulfide couples Cys-23 to Cys-75. Asn-43, Asn-72, Asn-84, Asn-95, Asn-166, Asn-238, Asn-261, Asn-365, and Asn-415 each carry an N-linked (GlcNAc...) asparagine glycan. Cystine bridges form between Cys-121–Cys-180, Cys-226–Cys-285, and Cys-330–Cys-392.

The basic structural unit consists of two identical heavy chains and two identical light chains; disulfide-linked. N-terminal variable regions of the heavy and light chains form the antigen binding sites, whereas the C-terminal constant regions of the heavy chains interact with immune receptors to mediate effector functions.

Its subcellular location is the secreted. It localises to the cell membrane. Functionally, constant region of immunoglobulin heavy chains. Immunoglobulins, also known as antibodies, are membrane-bound or secreted glycoproteins produced by B lymphocytes. In the recognition phase of humoral immunity, the membrane-bound immunoglobulins serve as receptors which, upon binding of a specific antigen, trigger the clonal expansion and differentiation of B lymphocytes into immunoglobulins-secreting plasma cells. Secreted immunoglobulins mediate the effector phase of humoral immunity, which results in the elimination of bound antigens. The antigen binding site is formed by the variable domain of one heavy chain, together with that of its associated light chain. Thus, each immunoglobulin has two antigen binding sites with remarkable affinity for a particular antigen. The variable domains are assembled by a process called V-(D)-J rearrangement and can then be subjected to somatic hypermutations which, after exposure to antigen and selection, allow affinity maturation for a particular antigen. The sequence is that of Immunoglobulin heavy constant epsilon from Mus musculus (Mouse).